Consider the following 833-residue polypeptide: Neurogenic locus protein delta (833 aa).

Positions 1–18 (MHWIKCLLTAFICFTVIV) are cleaved as a signal peptide. Over 19–594 (QVHSSGSFEL…ARADGLTNAQ (576 aa)) the chain is Extracellular. Disulfide bonds link Cys-46/Cys-61 and Cys-68/Cys-82. Asn-98, Asn-137, and Asn-167 each carry an N-linked (GlcNAc...) asparagine glycan. The DSL domain occupies 182-226 (VTCDLNYYGSGCAKFCRPRDDSFGHSTCSETGEIICLTGWQGDYC). Cystine bridges form between Cys-184–Cys-193, Cys-197–Cys-209, Cys-217–Cys-226, Cys-231–Cys-240, Cys-235–Cys-246, Cys-248–Cys-257, Cys-260–Cys-271, Cys-266–Cys-277, Cys-279–Cys-288, Cys-295–Cys-307, Cys-301–Cys-317, Cys-319–Cys-328, Cys-335–Cys-348, Cys-342–Cys-360, Cys-362–Cys-371, Cys-378–Cys-388, Cys-383–Cys-404, Cys-406–Cys-415, Cys-422–Cys-433, Cys-427–Cys-439, Cys-441–Cys-450, Cys-457–Cys-468, Cys-462–Cys-477, Cys-479–Cys-488, Cys-495–Cys-506, Cys-500–Cys-515, Cys-517–Cys-526, Cys-533–Cys-544, Cys-538–Cys-553, and Cys-555–Cys-564. 6 EGF-like domains span residues 227–258 (HIPKCAKGCEHGHCDKPNQCVCQLGWKGALCN), 256–289 (LCNECVLEPNCIHGTCNKPWTCICNEGWGGLYCN), 291–329 (DLNYCTNHRPCKNGGTCFNTGEGLYTCKCAPGYSGDDCE), 331–372 (EIYS…KMCE), 374–416 (KVLT…PNCD), and 418–451 (QLDNCSPNPCINGGSCQPSGKCICPAGFSGTRCE). Residues 453–489 (NIDDCLGHQCENGGTCIDMVNQYRCQCVPGFHGTHCS) form the EGF-like 7; calcium-binding domain. The 37-residue stretch at 491-527 (KVDLCLIRPCANGGTCLNLNNDYQCTCRAGFTGKDCS) folds into the EGF-like 8 domain. The EGF-like 9; calcium-binding domain occupies 529-565 (DIDECSSGPCHNGGTCMNRVNSFECVCANGFRGKQCD). Residues 595 to 617 (VVLIAVFSVAMPLVAVIAACVVF) form a helical membrane-spanning segment. Topologically, residues 618 to 833 (CMKRKRKRAQ…RSVVCGTPHM (216 aa)) are cytoplasmic. Residue Thr-666 is modified to Phosphothreonine. Residues 743-773 (QLNTDPTLMHRGSPAGSSAKGASGGGPGAAE) are disordered. Residues 754 to 763 (GSPAGSSAKG) are compositionally biased toward low complexity.

In terms of assembly, interacts with Notch (N) via the EGF repeats and the N EGF repeats. In terms of processing, ubiquitinated by Mib, leading to its endocytosis and subsequent degradation. Detected in all areas with neurogenic abilities, for example the neurogenic ectoderm and the primordia of the sense organs. Later expression is restricted to those cells that have adopted a neural fate.

Its subcellular location is the membrane. Its function is as follows. Acts as a ligand for Notch (N) receptor. Essential for proper differentiation of ectoderm. Delta is required for the correct separation of neural and epidermal cell lineages. Fringe (fng) acts in the Golgi to determine the type of O-linked fucose on the EGF modules in N, altering the ability of N to bind with Delta. O-fut1 also has a role in modulating the interaction. This is Neurogenic locus protein delta from Drosophila melanogaster (Fruit fly).